A 262-amino-acid polypeptide reads, in one-letter code: Phosphonates import ATP-binding protein PhnC (262 aa).

Residues Ile-5–Asn-253 form the ABC transporter domain. An ATP-binding site is contributed by Gly-37 to Ser-44.

It belongs to the ABC transporter superfamily. Phosphonates importer (TC 3.A.1.9.1) family. The complex is composed of two ATP-binding proteins (PhnC), two transmembrane proteins (PhnE) and a solute-binding protein (PhnD).

The protein resides in the cell inner membrane. The catalysed reaction is phosphonate(out) + ATP + H2O = phosphonate(in) + ADP + phosphate + H(+). Functionally, part of the ABC transporter complex PhnCDE involved in phosphonates import. Responsible for energy coupling to the transport system. This is Phosphonates import ATP-binding protein PhnC from Shigella flexneri serotype 5b (strain 8401).